The sequence spans 273 residues: Large ribosomal subunit protein uL2 (273 aa).

The segment at Gly222–Lys273 is disordered. Basic and acidic residues predominate over residues Ser264 to Lys273.

Belongs to the universal ribosomal protein uL2 family. As to quaternary structure, part of the 50S ribosomal subunit. Forms a bridge to the 30S subunit in the 70S ribosome.

Its function is as follows. One of the primary rRNA binding proteins. Required for association of the 30S and 50S subunits to form the 70S ribosome, for tRNA binding and peptide bond formation. It has been suggested to have peptidyltransferase activity; this is somewhat controversial. Makes several contacts with the 16S rRNA in the 70S ribosome. This Syntrophobacter fumaroxidans (strain DSM 10017 / MPOB) protein is Large ribosomal subunit protein uL2.